Reading from the N-terminus, the 362-residue chain is MNIKSLLLGSAAALVAASGAQAADAIVAPEPEAVEYVRVCDAYGAGYFYIPGTETCLRVHGYVRYDVKGGDDVYSGTDRNGWDKSARFALRVSTGSETELGTLKTFTELRFNYAANNSGVDGKYGNETSSGTVMEFAYIQLGGLRVGIDESEFHTFTGYLGDVINDDVISAGSYRTGKISYTFTGGNGFSAVIALEQGGDNDGGYTGTTNYRIDGYMPDVVGGLKYAGGWGSIAGVVAYDSVIEEWAAKVRGDVNITDQFSVWLQGAYSSAATPDQNYGQWGGDWAVWGGLKYQATQKAAFNLQAAHDDWGKTAVTANVAYELVPGFTVTPEVSYTKFGGEWKNTVAEDNAWGGIVRFQRSF.

A signal peptide spans 1–22 (MNIKSLLLGSAAALVAASGAQA).

Belongs to the alphaproteobacteria porin family. Homotrimer.

It localises to the cell outer membrane. Its function is as follows. Forms passive diffusion pores that allow small molecular weight hydrophilic materials across the outer membrane. The chain is Porin Omp2b (omp2b) from Brucella suis biovar 1 (strain 1330).